Reading from the N-terminus, the 149-residue chain is uncharacterized protein (149 aa).

This is an uncharacterized protein from Escherichia coli (strain K12).